The chain runs to 369 residues: tRNA 2-selenouridine synthase (369 aa).

The Rhodanese domain occupies 12–136 (FLEDTPLMDV…LRNFLFETTR (125 aa)). The active-site S-selanylcysteine intermediate is cysteine 95.

This sequence belongs to the SelU family. In terms of assembly, monomer.

The enzyme catalyses 5-methylaminomethyl-2-thiouridine(34) in tRNA + selenophosphate + (2E)-geranyl diphosphate + H2O + H(+) = 5-methylaminomethyl-2-selenouridine(34) in tRNA + (2E)-thiogeraniol + phosphate + diphosphate. It carries out the reaction 5-methylaminomethyl-2-thiouridine(34) in tRNA + (2E)-geranyl diphosphate = 5-methylaminomethyl-S-(2E)-geranyl-thiouridine(34) in tRNA + diphosphate. The catalysed reaction is 5-methylaminomethyl-S-(2E)-geranyl-thiouridine(34) in tRNA + selenophosphate + H(+) = 5-methylaminomethyl-2-(Se-phospho)selenouridine(34) in tRNA + (2E)-thiogeraniol. It catalyses the reaction 5-methylaminomethyl-2-(Se-phospho)selenouridine(34) in tRNA + H2O = 5-methylaminomethyl-2-selenouridine(34) in tRNA + phosphate. Involved in the post-transcriptional modification of the uridine at the wobble position (U34) of tRNA(Lys), tRNA(Glu) and tRNA(Gln). Catalyzes the conversion of 2-thiouridine (S2U-RNA) to 2-selenouridine (Se2U-RNA). Acts in a two-step process involving geranylation of 2-thiouridine (S2U) to S-geranyl-2-thiouridine (geS2U) and subsequent selenation of the latter derivative to 2-selenouridine (Se2U) in the tRNA chain. This is tRNA 2-selenouridine synthase from Pseudomonas paraeruginosa (strain DSM 24068 / PA7) (Pseudomonas aeruginosa (strain PA7)).